Reading from the N-terminus, the 405-residue chain is GTPase Obg (405 aa).

The 159-residue stretch at Met-1–Leu-159 folds into the Obg domain. The interval Asn-127–Glu-148 is disordered. Residues Arg-129–Pro-143 show a composition bias toward polar residues. Residues Ala-160–Asp-333 form the OBG-type G domain. GTP-binding positions include Gly-166–Ser-173, Phe-191–Val-195, Asp-213–Gly-216, Asn-283–Asp-286, and Ser-314–Leu-316. Mg(2+) is bound by residues Ser-173 and Thr-193. The segment covering Ala-383 to Gly-398 has biased composition (acidic residues). Positions Ala-383 to Arg-405 are disordered.

The protein belongs to the TRAFAC class OBG-HflX-like GTPase superfamily. OBG GTPase family. Monomer. It depends on Mg(2+) as a cofactor.

It is found in the cytoplasm. Functionally, an essential GTPase which binds GTP, GDP and possibly (p)ppGpp with moderate affinity, with high nucleotide exchange rates and a fairly low GTP hydrolysis rate. Plays a role in control of the cell cycle, stress response, ribosome biogenesis and in those bacteria that undergo differentiation, in morphogenesis control. This chain is GTPase Obg, found in Azotobacter vinelandii (strain DJ / ATCC BAA-1303).